Consider the following 626-residue polypeptide: Chaperone protein HtpG (626 aa).

The interval 1–331 is a; substrate-binding; that stretch reads MSETVERHEF…TDDLPLNVSR (331 aa). The b stretch occupies residues 332–544; the sequence is EMLQSTPTLQ…GMGPDLQMQR (213 aa). A c region spans residues 545–626; the sequence is LLRRAGRGFG…GTAAKPAESA (82 aa).

It belongs to the heat shock protein 90 family. As to quaternary structure, homodimer.

Its subcellular location is the cytoplasm. Molecular chaperone. Has ATPase activity. In Methylorubrum extorquens (strain PA1) (Methylobacterium extorquens), this protein is Chaperone protein HtpG.